The following is a 237-amino-acid chain: Ribosomal RNA small subunit methyltransferase G (237 aa).

Residues Gly78, Phe83, 129 to 130, and Arg148 contribute to the S-adenosyl-L-methionine site; that span reads AE. Residues 218 to 237 are disordered; that stretch reads KKETPNKYPRKAGMPNKRPL.

It belongs to the methyltransferase superfamily. RNA methyltransferase RsmG family.

It is found in the cytoplasm. Its function is as follows. Specifically methylates the N7 position of a guanine in 16S rRNA. The chain is Ribosomal RNA small subunit methyltransferase G from Streptococcus gordonii (strain Challis / ATCC 35105 / BCRC 15272 / CH1 / DL1 / V288).